The chain runs to 145 residues: D-aminoacyl-tRNA deacylase (145 aa).

A Gly-cisPro motif, important for rejection of L-amino acids motif is present at residues 137 to 138; the sequence is GP.

Belongs to the DTD family. Homodimer.

The protein localises to the cytoplasm. The catalysed reaction is glycyl-tRNA(Ala) + H2O = tRNA(Ala) + glycine + H(+). It carries out the reaction a D-aminoacyl-tRNA + H2O = a tRNA + a D-alpha-amino acid + H(+). In terms of biological role, an aminoacyl-tRNA editing enzyme that deacylates mischarged D-aminoacyl-tRNAs. Also deacylates mischarged glycyl-tRNA(Ala), protecting cells against glycine mischarging by AlaRS. Acts via tRNA-based rather than protein-based catalysis; rejects L-amino acids rather than detecting D-amino acids in the active site. By recycling D-aminoacyl-tRNA to D-amino acids and free tRNA molecules, this enzyme counteracts the toxicity associated with the formation of D-aminoacyl-tRNA entities in vivo and helps enforce protein L-homochirality. This chain is D-aminoacyl-tRNA deacylase, found in Salmonella typhi.